Reading from the N-terminus, the 445-residue chain is Methylthioribose-1-phosphate isomerase (445 aa).

Asp286 acts as the Proton donor in catalysis.

Belongs to the eIF-2B alpha/beta/delta subunits family. MtnA subfamily.

Its subcellular location is the cytoplasm. It is found in the nucleus. The enzyme catalyses 5-(methylsulfanyl)-alpha-D-ribose 1-phosphate = 5-(methylsulfanyl)-D-ribulose 1-phosphate. It functions in the pathway amino-acid biosynthesis; L-methionine biosynthesis via salvage pathway; L-methionine from S-methyl-5-thio-alpha-D-ribose 1-phosphate: step 1/6. In terms of biological role, catalyzes the interconversion of methylthioribose-1-phosphate (MTR-1-P) into methylthioribulose-1-phosphate (MTRu-1-P). This Sclerotinia sclerotiorum (strain ATCC 18683 / 1980 / Ss-1) (White mold) protein is Methylthioribose-1-phosphate isomerase (mri1).